The primary structure comprises 244 residues: Sepiapterin reductase (244 aa).

Residues 9 to 15 (GAGKGIG), 40 to 42 (SRT), 66 to 67 (DI), and asparagine 93 each bind NADP(+). Phenylalanine 99 provides a ligand contact to substrate. Position 116 (threonine 116) interacts with NADP(+). Substrate-binding residues include serine 145 and tyrosine 158. NADP(+)-binding positions include tyrosine 158, lysine 162, and 191-196 (VYTPMW). Substrate is bound at residue tryptophan 196.

It belongs to the short-chain dehydrogenases/reductases (SDR) family. In terms of assembly, homodimer.

It localises to the cytoplasm. It carries out the reaction L-threo-7,8-dihydrobiopterin + NADP(+) = L-sepiapterin + NADPH + H(+). The catalysed reaction is L-threo-tetrahydrobiopterin + 2 NADP(+) = 6-pyruvoyl-5,6,7,8-tetrahydropterin + 2 NADPH + 2 H(+). With respect to regulation, slightly inhibited by N-acetyldopamine but not by N-acetylserotonin or melatonin. Functionally, catalyzes the final reductions in tetra-hydrobiopterin biosynthesis to form 5,6,7,8-tetrahydrobiopterin. The sequence is that of Sepiapterin reductase from Chlorobaculum tepidum (strain ATCC 49652 / DSM 12025 / NBRC 103806 / TLS) (Chlorobium tepidum).